Consider the following 692-residue polypeptide: Elongation factor G (692 aa).

One can recognise a tr-type G domain in the interval 8–282 (EKTRNIGIMA…AVLDYLPAPT (275 aa)). GTP contacts are provided by residues 17-24 (AHIDAGKT), 81-85 (DTPGH), and 135-138 (NKMD).

Belongs to the TRAFAC class translation factor GTPase superfamily. Classic translation factor GTPase family. EF-G/EF-2 subfamily.

The protein resides in the cytoplasm. In terms of biological role, catalyzes the GTP-dependent ribosomal translocation step during translation elongation. During this step, the ribosome changes from the pre-translocational (PRE) to the post-translocational (POST) state as the newly formed A-site-bound peptidyl-tRNA and P-site-bound deacylated tRNA move to the P and E sites, respectively. Catalyzes the coordinated movement of the two tRNA molecules, the mRNA and conformational changes in the ribosome. This is Elongation factor G from Bacillus licheniformis (strain ATCC 14580 / DSM 13 / JCM 2505 / CCUG 7422 / NBRC 12200 / NCIMB 9375 / NCTC 10341 / NRRL NRS-1264 / Gibson 46).